The following is a 143-amino-acid chain: uncharacterized protein (143 aa).

The segment at 1 to 21 (MAAMDTGQRADPSNPGDKEGD) is disordered.

This is an uncharacterized protein from Homo sapiens (Human).